Here is a 297-residue protein sequence, read N- to C-terminus: B-lymphocyte antigen CD20 (297 aa).

Topologically, residues 1-56 (MTTPRNSVNGTFPAEPMKGPIAMQSGPKPLFRRMSSLVGPTQSFFMRESKTLGAVQ) are cytoplasmic. At Ser36 the chain carries Phosphoserine. Residues 57-78 (IMNGLFHIALGGLLMIPAGIYA) traverse the membrane as a helical segment. The segment at 74-80 (AGIYAPI) is epitope 1. Topologically, residues 79-84 (PICVTV) are extracellular. The helical transmembrane segment at 85-105 (WYPLWGGIMYIISGSLLAATE) threads the bilayer. Over 106–120 (KNSRKCLVKGKMIMN) the chain is Cytoplasmic. Cys111 carries the S-palmitoyl cysteine lipid modification. The helical transmembrane segment at 121–141 (SLSLFAAISGMILSIMDILNI) threads the bilayer. Residues 142–188 (KISHFLKMESLNFIRAHTPYINIYNCEPANPSEKNSPSTQYCYSIQS) lie on the Extracellular side of the membrane. An epitope 2 region spans residues 146 to 160 (FLKMESLNFIRAHTP). Cys167 and Cys183 are oxidised to a cystine. Positions 168–175 (EPANPSEK) are epitope 3 (recognized by antibodies, including Rituximab). Residues 189 to 209 (LFLGILSVMLIFAFFQELVIA) form a helical membrane-spanning segment. Topologically, residues 210–297 (GIVENEWKRT…SSPIENDSSP (88 aa)) are cytoplasmic. Cys220 carries the S-palmitoyl cysteine lipid modification. Ser225 bears the Phosphoserine mark. Thr239 carries the phosphothreonine modification. The interval 247-297 (VGLTETSSQPKNEEDIEIIPIQEEEEEETETNFPEPPQDQESSPIENDSSP) is disordered. Acidic residues predominate over residues 260-276 (EDIEIIPIQEEEEEETE). A compositionally biased stretch (polar residues) spans 285 to 297 (DQESSPIENDSSP).

This sequence belongs to the MS4A family. As to quaternary structure, forms homotetramers. Interacts with the heavy and light chains of cell surface IgM, the antigen-binding components of the BCR. Post-translationally, phosphorylated on serines and threonines in resting B-cells. Protein kinase C/PKC can use CD20 as substrate. In terms of tissue distribution, expressed on B-cells.

It localises to the cell membrane. In terms of biological role, B-lymphocyte-specific membrane protein that plays a role in the regulation of cellular calcium influx necessary for the development, differentiation, and activation of B-lymphocytes. Functions as a store-operated calcium (SOC) channel component promoting calcium influx after activation by the B-cell receptor/BCR. This chain is B-lymphocyte antigen CD20 (MS4A1), found in Homo sapiens (Human).